Here is a 354-residue protein sequence, read N- to C-terminus: NAD-dependent protein deacetylase hst2-2 (354 aa).

The region spanning 16–279 (QCQNQTTLDS…REVARHLGWD (264 aa)) is the Deacetylase sirtuin-type domain. NAD(+) contacts are provided by residues 43–63 (GAGLSTSSGLADFRTPDTGLY) and 126–129 (QNID). His-146 (proton acceptor) is an active-site residue. 4 residues coordinate Zn(2+): Cys-154, Cys-157, Cys-178, and Cys-183. Residues 220-222 (GTS), 245-247 (NRE), and Cys-265 each bind NAD(+).

This sequence belongs to the sirtuin family. Class I subfamily. Zn(2+) is required as a cofactor.

Its subcellular location is the nucleus. The enzyme catalyses N(6)-acetyl-L-lysyl-[protein] + NAD(+) + H2O = 2''-O-acetyl-ADP-D-ribose + nicotinamide + L-lysyl-[protein]. In terms of biological role, NAD-dependent histone deacetylase, which could function in telomeric silencing, cell cycle progression and chromosome stability. This chain is NAD-dependent protein deacetylase hst2-2, found in Emericella nidulans (strain FGSC A4 / ATCC 38163 / CBS 112.46 / NRRL 194 / M139) (Aspergillus nidulans).